We begin with the raw amino-acid sequence, 30 residues long: Cyclotide hyen-F (30 aa).

The cyclopeptide (Gly-Asn) cross-link spans 1 to 30 (GLPCGESCVYIPCISTVLGCSCSNKVCYRN). 3 disulfides stabilise this stretch: Cys-4–Cys-20, Cys-8–Cys-22, and Cys-13–Cys-27.

In terms of processing, this is a cyclic peptide. As to expression, detected in seeds (at protein level).

In terms of biological role, probably participates in a plant defense mechanism. This chain is Cyclotide hyen-F, found in Pigea enneasperma (Spade flower).